The primary structure comprises 469 residues: Calcium/calmodulin-dependent protein kinase type IV (469 aa).

Phosphoserine; by autocatalysis occurs at positions 11 and 12. The region spanning 42 to 296 is the Protein kinase domain; the sequence is FEVESELGRG…TFQALQHPWV (255 aa). Residues 48–56 and Lys71 each bind ATP; that span reads LGRGATSIV. Residue Thr53 is glycosylated (O-linked (GlcNAc) threonine). Residue Ser54 is glycosylated (O-linked (GlcNAc) serine). O-linked (GlcNAc) serine glycosylation is present at Ser133. Asp160 acts as the Proton acceptor in catalysis. Residue Ser185 is glycosylated (O-linked (GlcNAc) serine). Residue Thr196 is modified to Phosphothreonine. Residues 297-336 form an autoinhibitory domain region; the sequence is TGKAANFVHMDTAQKKLQEFNARRKLKAAVKAVVASSRLG. Residues 302–319 are PP2A-binding; it reads NFVHMDTAQKKLQEFNAR. Positions 318 to 337 are calmodulin-binding; the sequence is ARRKLKAAVKAVVASSRLGS. Ser332 bears the Phosphoserine; by autocatalysis mark. The disordered stretch occupies residues 336–469; it reads GSASSSHTSI…PQQDAIQPEY (134 aa). At Ser337 the chain carries Phosphoserine. Ser340, Ser341, and Ser352 each carry an O-linked (GlcNAc) serine glycan. Residues 360-374 show a composition bias toward basic and acidic residues; sequence DAKDSTDLLGKKMQE. Positions 375-388 are enriched in acidic residues; sequence EDQEEDQVEAEASA. The span at 389–409 shows a compositional bias: basic and acidic residues; that stretch reads DEMRKLQSEEVEKDAGVKEEE. Positions 417–426 are enriched in acidic residues; it reads DPEDELETDD. The segment covering 427–441 has biased composition (basic and acidic residues); the sequence is PEMKRDSEEKLKSVE. 2 positions are modified to phosphoserine: Ser433 and Ser439. The segment covering 442–453 has biased composition (acidic residues); sequence EEMDPMTEEEAP.

Belongs to the protein kinase superfamily. CAMK Ser/Thr protein kinase family. CaMK subfamily. In terms of assembly, monomer. Interacts with protein phosphatase 2A (PPP2CA/PPP2CB); the interaction is mutually exclusive with binding to Ca(2+)/calmodulin. Phosphorylated by CaMKK1 and CaMKK2 on Thr-196. Dephosphorylated by protein phosphatase 2A. Autophosphorylated on Ser-11 and Ser-12. Post-translationally, glycosylation at Ser-185 modulates the phosphorylation of CaMK4 at Thr-196 and negatively regulates its activity toward CREB1 in basal conditions and during early inomycin stimulation. In terms of tissue distribution, expressed in brain and testis.

It localises to the cytoplasm. The protein localises to the nucleus. The enzyme catalyses L-seryl-[protein] + ATP = O-phospho-L-seryl-[protein] + ADP + H(+). It catalyses the reaction L-threonyl-[protein] + ATP = O-phospho-L-threonyl-[protein] + ADP + H(+). Its activity is regulated as follows. Activated by Ca(2+)/calmodulin. Binding of calmodulin results in conformational change that relieves intrasteric autoinhibition and allows phosphorylation of Thr-196 within the activation loop by CaMKK1 or CaMKK2. Phosphorylation of Thr-196 results in a 10-20-fold increase in total activity to generate Ca(2+)/calmodulin-independent activity. Autophosphorylation of the N-terminus Ser-11 and Ser-12 is required for full activation. Inactivated by protein phosphatase 2A (PPP2CA/PPP2CB) which dephosphorylates Thr-196, thereby terminating autonomous activity and helping to maintain the enzyme in its autoinhibited state. In terms of biological role, calcium/calmodulin-dependent protein kinase that operates in the calcium-triggered CaMKK-CaMK4 signaling cascade and regulates, mainly by phosphorylation, the activity of several transcription activators, such as CREB1, MEF2D, JUN and RORA, which play pivotal roles in immune response, inflammation, and memory consolidation. In the thymus, regulates the CD4(+)/CD8(+) double positive thymocytes selection threshold during T-cell ontogeny. In CD4 memory T-cells, is required to link T-cell antigen receptor (TCR) signaling to the production of IL2, IFNG and IL4 (through the regulation of CREB and MEF2). Regulates the differentiation and survival phases of osteoclasts and dendritic cells (DCs). Mediates DCs survival by linking TLR4 and the regulation of temporal expression of BCL2. Phosphorylates the transcription activator CREB1 on 'Ser-133' in hippocampal neuron nuclei and contribute to memory consolidation and long term potentiation (LTP) in the hippocampus. Can activate the MAP kinases MAPK1/ERK2, MAPK8/JNK1 and MAPK14/p38 and stimulate transcription through the phosphorylation of ELK1 and ATF2. Can also phosphorylate in vitro CREBBP, PRM2, MEF2A and STMN1/OP18. May be involved in spermatogenesis. This is Calcium/calmodulin-dependent protein kinase type IV (Camk4) from Mus musculus (Mouse).